A 754-amino-acid polypeptide reads, in one-letter code: Polycomb protein mes-3 (754 aa).

Residues 1–83 (MTPATAEVKV…PTKLENIQKT (83 aa)) form a disordered region. Residues 31 to 40 (ARREEEKENL) show a composition bias toward basic and acidic residues. Residues 51–61 (SSEAGSSRESS) are compositionally biased toward low complexity.

In terms of assembly, forms a heterotrimeric complex with the Polycomb proteins mes-2 and mes-3. Does not interact with mes-4. Interacts with nyfa-1. In adults, it is predominantly expressed in the germline, and weakly expressed in intestinal cells.

The protein resides in the nucleus. In terms of biological role, component of a Polycomb group (PcG) complex. PcG proteins act by forming multiprotein complexes, which are required to maintain the transcriptionally repressive state of homeotic genes throughout development. In association with the nfya-1-NF-Y complex, may play a role in repressing the expression of the homeobox protein egl-5 in tissues such as the head. PcG proteins are not required to initiate repression, but to maintain it during later stages of development. The mes-2/mes-3/mes-6 complex may participate in the global inactivation of the X chromosomes in germline cells. The complex may act via methylation of histone H3 'Lys-27', rendering chromatin heritably changed in its expressibility. This complex is required to exclude mes-4 from the inactivated X-chromosomes in germline cells. The protein is Polycomb protein mes-3 of Caenorhabditis elegans.